The chain runs to 340 residues: Citramalyl-CoA lyase, mitochondrial (340 aa).

Residues 1-22 (MALRLLRRAARGAAAAALLRLK) constitute a mitochondrion transit peptide. Substrate is bound by residues Tyr50, Lys57, and Lys61. N6-acetyllysine is present on residues Lys57 and Lys61. N6-acetyllysine; alternate occurs at positions 82 and 92. Residues Lys82 and Lys92 each carry the N6-succinyllysine; alternate modification. Arg107 is a binding site for substrate. Residues Glu171 and Asp206 each contribute to the Mg(2+) site. Position 272–273 (272–273 (IH)) interacts with substrate. N6-succinyllysine is present on Lys309. Asp320 is an active-site residue.

It belongs to the HpcH/HpaI aldolase family. Citrate lyase beta subunit-like subfamily. As to quaternary structure, homotrimer. Requires Mg(2+) as cofactor.

It localises to the mitochondrion. It catalyses the reaction glyoxylate + acetyl-CoA + H2O = (S)-malate + CoA + H(+). It carries out the reaction propanoyl-CoA + glyoxylate + H2O = 3-methylmalate + CoA + H(+). The enzyme catalyses (3S)-citramalyl-CoA = pyruvate + acetyl-CoA. The catalysed reaction is (S)-malyl-CoA + H2O = (S)-malate + CoA + H(+). In terms of biological role, mitochondrial citramalyl-CoA lyase indirectly involved in the vitamin B12 metabolism. Converts citramalyl-CoA into acetyl-CoA and pyruvate in the C5-dicarboxylate catabolism pathway. The C5-dicarboxylate catabolism pathway is required to detoxify itaconate, a vitamin B12-poisoning metabolite. Also acts as a malate synthase in vitro, converting glyoxylate and acetyl-CoA to malate. Also displays malyl-CoA thioesterase activity. Also acts as a beta-methylmalate synthase in vitro, by mediating conversion of glyoxylate and propionyl-CoA to beta-methylmalate. Also has very weak citramalate synthase activity in vitro. This Homo sapiens (Human) protein is Citramalyl-CoA lyase, mitochondrial.